A 345-amino-acid polypeptide reads, in one-letter code: Anthranilate phosphoribosyltransferase (345 aa).

5-phospho-alpha-D-ribose 1-diphosphate-binding positions include Gly-83, 86 to 87 (GD), Thr-91, 93 to 96 (NIST), 111 to 119 (KHGNRNLSS), and Ser-123. An anthranilate-binding site is contributed by Gly-83. Ser-95 is a binding site for Mg(2+). Residue Asn-114 participates in anthranilate binding. Residue Arg-169 coordinates anthranilate. Residues Asp-228 and Glu-229 each coordinate Mg(2+).

It belongs to the anthranilate phosphoribosyltransferase family. As to quaternary structure, homodimer. It depends on Mg(2+) as a cofactor.

The enzyme catalyses N-(5-phospho-beta-D-ribosyl)anthranilate + diphosphate = 5-phospho-alpha-D-ribose 1-diphosphate + anthranilate. It participates in amino-acid biosynthesis; L-tryptophan biosynthesis; L-tryptophan from chorismate: step 2/5. Functionally, catalyzes the transfer of the phosphoribosyl group of 5-phosphorylribose-1-pyrophosphate (PRPP) to anthranilate to yield N-(5'-phosphoribosyl)-anthranilate (PRA). The protein is Anthranilate phosphoribosyltransferase of Paracoccus denitrificans (strain Pd 1222).